The chain runs to 209 residues: NDR1/HIN1-like protein 1 (209 aa).

The chain crosses the membrane as a helical span at residues 18–38; the sequence is IFWSIIFVLFIIFLTILLIWA. N-linked (GlcNAc...) asparagine glycosylation occurs at Asn58.

Expressed in rosette leaves, cauline leaves, stems, and siliques, and at lower levels in roots and flowers.

Its subcellular location is the cell membrane. In terms of biological role, may play a role in plant immunity. The protein is NDR1/HIN1-like protein 1 of Arabidopsis thaliana (Mouse-ear cress).